We begin with the raw amino-acid sequence, 249 residues long: 5'-nucleotidase SurE 2 (249 aa).

Residues Asp8, Asp9, Ser40, and Asn90 each coordinate a divalent metal cation.

This sequence belongs to the SurE nucleotidase family. Requires a divalent metal cation as cofactor.

Its subcellular location is the cytoplasm. The enzyme catalyses a ribonucleoside 5'-phosphate + H2O = a ribonucleoside + phosphate. In terms of biological role, nucleotidase that shows phosphatase activity on nucleoside 5'-monophosphates. In Pyrobaculum aerophilum (strain ATCC 51768 / DSM 7523 / JCM 9630 / CIP 104966 / NBRC 100827 / IM2), this protein is 5'-nucleotidase SurE 2.